We begin with the raw amino-acid sequence, 245 residues long: 3-deoxy-manno-octulosonate cytidylyltransferase (245 aa).

It belongs to the KdsB family.

It localises to the cytoplasm. It catalyses the reaction 3-deoxy-alpha-D-manno-oct-2-ulosonate + CTP = CMP-3-deoxy-beta-D-manno-octulosonate + diphosphate. The protein operates within nucleotide-sugar biosynthesis; CMP-3-deoxy-D-manno-octulosonate biosynthesis; CMP-3-deoxy-D-manno-octulosonate from 3-deoxy-D-manno-octulosonate and CTP: step 1/1. It participates in bacterial outer membrane biogenesis; lipopolysaccharide biosynthesis. Functionally, activates KDO (a required 8-carbon sugar) for incorporation into bacterial lipopolysaccharide in Gram-negative bacteria. This chain is 3-deoxy-manno-octulosonate cytidylyltransferase, found in Rhodopseudomonas palustris (strain TIE-1).